A 703-amino-acid chain; its full sequence is Polyribonucleotide nucleotidyltransferase (703 aa).

Positions 489 and 495 each coordinate Mg(2+). The KH domain occupies 556 to 615; it reads PTMIAMKIDTDKIRDVIGKGGATIRAICEETKASIDIEDDGSIKIFGETKEAAEAARQRV. Residues 625–693 form the S1 motif domain; the sequence is GKIYVGKVER…NRGRIKLSIK (69 aa).

The protein belongs to the polyribonucleotide nucleotidyltransferase family. In terms of assembly, component of the RNA degradosome, which is a multiprotein complex involved in RNA processing and mRNA degradation. Mg(2+) serves as cofactor.

The protein resides in the cytoplasm. It carries out the reaction RNA(n+1) + phosphate = RNA(n) + a ribonucleoside 5'-diphosphate. In terms of biological role, involved in mRNA degradation. Catalyzes the phosphorolysis of single-stranded polyribonucleotides processively in the 3'- to 5'-direction. This chain is Polyribonucleotide nucleotidyltransferase, found in Pseudomonas fluorescens (strain ATCC BAA-477 / NRRL B-23932 / Pf-5).